Consider the following 316-residue polypeptide: Transaldolase (316 aa).

K126 serves as the catalytic Schiff-base intermediate with substrate.

Belongs to the transaldolase family. Type 1 subfamily. Homodimer.

The protein resides in the cytoplasm. It carries out the reaction D-sedoheptulose 7-phosphate + D-glyceraldehyde 3-phosphate = D-erythrose 4-phosphate + beta-D-fructose 6-phosphate. It participates in carbohydrate degradation; pentose phosphate pathway; D-glyceraldehyde 3-phosphate and beta-D-fructose 6-phosphate from D-ribose 5-phosphate and D-xylulose 5-phosphate (non-oxidative stage): step 2/3. In terms of biological role, transaldolase is important for the balance of metabolites in the pentose-phosphate pathway. The chain is Transaldolase from Methylibium petroleiphilum (strain ATCC BAA-1232 / LMG 22953 / PM1).